The chain runs to 253 residues: Demethylmenaquinone methyltransferase (253 aa).

Residues Thr75, Asp96, and 124–125 contribute to the S-adenosyl-L-methionine site; that span reads DA.

It belongs to the class I-like SAM-binding methyltransferase superfamily. MenG/UbiE family.

The catalysed reaction is a 2-demethylmenaquinol + S-adenosyl-L-methionine = a menaquinol + S-adenosyl-L-homocysteine + H(+). The protein operates within quinol/quinone metabolism; menaquinone biosynthesis; menaquinol from 1,4-dihydroxy-2-naphthoate: step 2/2. Functionally, methyltransferase required for the conversion of demethylmenaquinol (DMKH2) to menaquinol (MKH2). The polypeptide is Demethylmenaquinone methyltransferase (Desulfitobacterium hafniense (strain Y51)).